The primary structure comprises 540 residues: Chaperonin GroEL (540 aa).

Residues 29-32, 86-90, glycine 413, and aspartate 493 each bind ATP; these read TLGP and DGTTT. Positions 520–540 are disordered; that stretch reads AEKPEPKPAPGPADPGAGMDF.

This sequence belongs to the chaperonin (HSP60) family. Forms a cylinder of 14 subunits composed of two heptameric rings stacked back-to-back. Interacts with the co-chaperonin GroES.

It localises to the cytoplasm. The enzyme catalyses ATP + H2O + a folded polypeptide = ADP + phosphate + an unfolded polypeptide.. In terms of biological role, together with its co-chaperonin GroES, plays an essential role in assisting protein folding. The GroEL-GroES system forms a nano-cage that allows encapsulation of the non-native substrate proteins and provides a physical environment optimized to promote and accelerate protein folding. This is Chaperonin GroEL from Tropheryma whipplei (Whipple's bacillus).